The sequence spans 159 residues: E3 ubiquitin ligase complex SCF subunit sconC (159 aa).

The tract at residues 101–159 (ILAANYLDIKALLDVGCKTVANMIKGKSPEEIRKTFNIQNDFTPEEEDQIRRENEWAEE) is interaction with the F-box domain of F-box proteins.

This sequence belongs to the SKP1 family. In terms of assembly, component of the SCF (SKP1-CUL1-F-box protein) E3 ubiquitin ligase complexes.

Its pathway is protein modification; protein ubiquitination. Its function is as follows. Essential component of the SCF (SKP1-CUL1-F-box protein) E3 ubiquitin ligase complexes, which mediate the ubiquitination and subsequent proteasomal degradation of target proteins. Controls sulfur metabolite repression, probably by mediating the inactivation or degradation of the metR transcription factor. The sequence is that of E3 ubiquitin ligase complex SCF subunit sconC (sconC) from Aspergillus clavatus (strain ATCC 1007 / CBS 513.65 / DSM 816 / NCTC 3887 / NRRL 1 / QM 1276 / 107).